The following is a 484-amino-acid chain: ATP synthase subunit beta (484 aa).

168-175 (GGAGVGKT) contacts ATP.

Belongs to the ATPase alpha/beta chains family. As to quaternary structure, F-type ATPases have 2 components, CF(1) - the catalytic core - and CF(0) - the membrane proton channel. CF(1) has five subunits: alpha(3), beta(3), gamma(1), delta(1), epsilon(1). CF(0) has three main subunits: a(1), b(2) and c(9-12). The alpha and beta chains form an alternating ring which encloses part of the gamma chain. CF(1) is attached to CF(0) by a central stalk formed by the gamma and epsilon chains, while a peripheral stalk is formed by the delta and b chains.

It is found in the cell membrane. The enzyme catalyses ATP + H2O + 4 H(+)(in) = ADP + phosphate + 5 H(+)(out). Its function is as follows. Produces ATP from ADP in the presence of a proton gradient across the membrane. The catalytic sites are hosted primarily by the beta subunits. In Pseudarthrobacter chlorophenolicus (strain ATCC 700700 / DSM 12829 / CIP 107037 / JCM 12360 / KCTC 9906 / NCIMB 13794 / A6) (Arthrobacter chlorophenolicus), this protein is ATP synthase subunit beta.